Here is a 617-residue protein sequence, read N- to C-terminus: Transmembrane protein 232 (617 aa).

A helical membrane pass occupies residues 129-149 (LVKIGYLIFLRLFVFFLHGHL). Residues 567–604 (LKQIEAVCEAQNRKDEEEKEKIRFQEIMKQRERKLNKQ) are a coiled coil. Positions 598-617 (ERKLNKQTKPYEITPSEKKE) are disordered.

The protein resides in the membrane. Plays a critical role for male fertility and sperm motility by regulating sperm cytoplasm removal and maintaining axoneme integrity. The sequence is that of Transmembrane protein 232 (Tmem232) from Rattus norvegicus (Rat).